The chain runs to 652 residues: MKKRIKELTDLLNRYRYDYYTKDAPSVSDSDYDKLYRELVTLEQSYPEYVLQDSPTQQVGGTILKGFEKYRHQYPLFSLQDAFSREELDAFDKRVKAEFPNATYLAELKIDGLSISLSYENGFLQVGATRGDGNIGENITENIKKIKDIPHQLSEPLTITVRGEAYMSRQSFKAINEARQENGETEFANPRNAAAGTLRQLDTSVVAKRQLATFLYQEASPTARNQQNEVLAELAGLGFSVNPYYQLTSSMDEIWDFIKTIEAKRDQLAYDIDGVVIKVNSLAMQEELGFTVKAPRWAIAYKFPAEEKEAEILSVDWTVGRTGVVTPTANLTPVQLAGTTVSRATLHNVDYIAEKDIRIGDTVIVYKAGDIIPAVLNVVMSKRNQQEVMLIPKLCPSCGSELVHFEDEVALRCINPLCPSLIQRSLEHFASRDAMNITGLGPAIVEKLFLAGFVHDVADIYQLTKENFMQLDGIKEKSADKLLAAIEASKSNSAEKLLFGLGIRHIGSKVSRLILEVYGDISALLTAKEEEIARIDGLGSTIAQSLTQYFEQKTAAILVDELKTAGVNMHYSGQKVNSDAALFGLTVVLTGKLNQLNRNEAKDKLEALGAKVTGSVSKKTDLVIAGSDAGSKLEKAKSLGIRIEDEDWLRQL.

NAD(+) contacts are provided by residues 29 to 33 (DSDYD), 78 to 79 (SL), and E107. Catalysis depends on K109, which acts as the N6-AMP-lysine intermediate. NAD(+)-binding residues include R130, E164, K278, and K302. Positions 395, 398, 413, and 418 each coordinate Zn(2+). The 76-residue stretch at 577–652 (NSDAALFGLT…IEDEDWLRQL (76 aa)) folds into the BRCT domain.

It belongs to the NAD-dependent DNA ligase family. LigA subfamily. Mg(2+) serves as cofactor. Requires Mn(2+) as cofactor.

The enzyme catalyses NAD(+) + (deoxyribonucleotide)n-3'-hydroxyl + 5'-phospho-(deoxyribonucleotide)m = (deoxyribonucleotide)n+m + AMP + beta-nicotinamide D-nucleotide.. Functionally, DNA ligase that catalyzes the formation of phosphodiester linkages between 5'-phosphoryl and 3'-hydroxyl groups in double-stranded DNA using NAD as a coenzyme and as the energy source for the reaction. It is essential for DNA replication and repair of damaged DNA. The polypeptide is DNA ligase (Streptococcus pyogenes serotype M12 (strain MGAS2096)).